A 188-amino-acid chain; its full sequence is Large ribosomal subunit protein eL18 (188 aa).

The tract at residues 147-188 is disordered; that stretch reads EANKHFGPAPGVPHSHTKAHVRSKGRQFERARGRRTSKGYKK. Composition is skewed to basic residues over residues 161–171 and 178–188; these read SHTKAHVRSKG and RGRRTSKGYKK.

This sequence belongs to the eukaryotic ribosomal protein eL18 family.

The protein localises to the cytoplasm. The sequence is that of Large ribosomal subunit protein eL18 (RpL18) from Diaphorina citri (Asian citrus psyllid).